Consider the following 99-residue polypeptide: NADH-quinone oxidoreductase subunit K (99 aa).

The next 3 membrane-spanning stretches (helical) occupy residues 3–23, 28–48, and 59–79; these read PENY…GVLI, IIVF…FVTF, and VFAF…LAII.

It belongs to the complex I subunit 4L family. In terms of assembly, NDH-1 is composed of 14 different subunits. Subunits NuoA, H, J, K, L, M, N constitute the membrane sector of the complex.

It is found in the cell membrane. It catalyses the reaction a quinone + NADH + 5 H(+)(in) = a quinol + NAD(+) + 4 H(+)(out). NDH-1 shuttles electrons from NADH, via FMN and iron-sulfur (Fe-S) centers, to quinones in the respiratory chain. The immediate electron acceptor for the enzyme in this species is believed to be a menaquinone. Couples the redox reaction to proton translocation (for every two electrons transferred, four hydrogen ions are translocated across the cytoplasmic membrane), and thus conserves the redox energy in a proton gradient. The polypeptide is NADH-quinone oxidoreductase subunit K (Rhodococcus jostii (strain RHA1)).